The sequence spans 286 residues: 4-hydroxybenzoate octaprenyltransferase (286 aa).

8 helical membrane-spanning segments follow: residues 20–40, 43–63, 96–116, 142–162, 167–187, 210–230, 235–255, and 266–286; these read IGTL…AGGM, LKVL…GCII, LFVI…GLVV, FLGV…TGEV, WWLF…YAMV, QIIG…GWSA, VYGL…MLIF, and FLNN…DYLF.

Belongs to the UbiA prenyltransferase family. Mg(2+) serves as cofactor.

The protein resides in the cell inner membrane. The catalysed reaction is all-trans-octaprenyl diphosphate + 4-hydroxybenzoate = 4-hydroxy-3-(all-trans-octaprenyl)benzoate + diphosphate. It functions in the pathway cofactor biosynthesis; ubiquinone biosynthesis. Catalyzes the prenylation of para-hydroxybenzoate (PHB) with an all-trans polyprenyl group. Mediates the second step in the final reaction sequence of ubiquinone-8 (UQ-8) biosynthesis, which is the condensation of the polyisoprenoid side chain with PHB, generating the first membrane-bound Q intermediate 3-octaprenyl-4-hydroxybenzoate. The protein is 4-hydroxybenzoate octaprenyltransferase of Shewanella oneidensis (strain ATCC 700550 / JCM 31522 / CIP 106686 / LMG 19005 / NCIMB 14063 / MR-1).